Consider the following 358-residue polypeptide: Peptide chain release factor 1 (358 aa).

Glutamine 233 carries the post-translational modification N5-methylglutamine.

It belongs to the prokaryotic/mitochondrial release factor family. Methylated by PrmC. Methylation increases the termination efficiency of RF1.

It is found in the cytoplasm. Its function is as follows. Peptide chain release factor 1 directs the termination of translation in response to the peptide chain termination codons UAG and UAA. The chain is Peptide chain release factor 1 from Geobacillus kaustophilus (strain HTA426).